We begin with the raw amino-acid sequence, 291 residues long: T-cell leukemia homeobox protein 3 (291 aa).

The interval 1-56 (MEAPASAQTPHPHEPISFGIDQILNSPDQDSAPAPRGPDGASYLGGPPGGRPGATY) is disordered. Positions 166–225 (RKKPRTSFSRVQICELEKRFHRQKYLASAERAALAKSLKMTDAQVKTWFQNRRTKWRRQT) form a DNA-binding region, homeobox.

Its subcellular location is the nucleus. The protein is T-cell leukemia homeobox protein 3 (TLX3) of Homo sapiens (Human).